A 200-amino-acid chain; its full sequence is Segregation and condensation protein B (200 aa).

The protein belongs to the ScpB family. Homodimer. Homodimerization may be required to stabilize the binding of ScpA to the Smc head domains. Component of a cohesin-like complex composed of ScpA, ScpB and the Smc homodimer, in which ScpA and ScpB bind to the head domain of Smc. The presence of the three proteins is required for the association of the complex with DNA.

It is found in the cytoplasm. In terms of biological role, participates in chromosomal partition during cell division. May act via the formation of a condensin-like complex containing Smc and ScpA that pull DNA away from mid-cell into both cell halves. The sequence is that of Segregation and condensation protein B from Lactobacillus delbrueckii subsp. bulgaricus (strain ATCC 11842 / DSM 20081 / BCRC 10696 / JCM 1002 / NBRC 13953 / NCIMB 11778 / NCTC 12712 / WDCM 00102 / Lb 14).